We begin with the raw amino-acid sequence, 123 residues long: Small ribosomal subunit protein eS8 (123 aa).

Residues 1-38 are disordered; it reads MKDQGRSPRKRTGGRRRPNHKKKKHELGKDTVETQVGE. Positions 7 to 26 are enriched in basic residues; the sequence is SPRKRTGGRRRPNHKKKKHE.

Part of the 30S ribosomal subunit.

The polypeptide is Small ribosomal subunit protein eS8 (rps8e) (Haloarcula marismortui (strain ATCC 43049 / DSM 3752 / JCM 8966 / VKM B-1809) (Halobacterium marismortui)).